The chain runs to 209 residues: Dephospho-CoA kinase (209 aa).

A DPCK domain is found at 13–209 (RIGLTGGIAT…AIEKVVVAEN (197 aa)). Residue 21 to 26 (ATGKST) coordinates ATP.

Belongs to the CoaE family.

It localises to the cytoplasm. The catalysed reaction is 3'-dephospho-CoA + ATP = ADP + CoA + H(+). Its pathway is cofactor biosynthesis; coenzyme A biosynthesis; CoA from (R)-pantothenate: step 5/5. Catalyzes the phosphorylation of the 3'-hydroxyl group of dephosphocoenzyme A to form coenzyme A. This Synechococcus elongatus (strain ATCC 33912 / PCC 7942 / FACHB-805) (Anacystis nidulans R2) protein is Dephospho-CoA kinase.